A 182-amino-acid polypeptide reads, in one-letter code: NADH-quinone oxidoreductase subunit I (182 aa).

4Fe-4S ferredoxin-type domains follow at residues 52–82 (LTRD…LQKA) and 92–121 (DFFR…LTPD). Residues cysteine 62, cysteine 65, cysteine 68, cysteine 72, cysteine 101, cysteine 104, cysteine 107, and cysteine 111 each coordinate [4Fe-4S] cluster.

It belongs to the complex I 23 kDa subunit family. In terms of assembly, NDH-1 is composed of 13 different subunits. Subunits NuoA, H, J, K, L, M, N constitute the membrane sector of the complex. It depends on [4Fe-4S] cluster as a cofactor.

The protein localises to the cell inner membrane. The enzyme catalyses a quinone + NADH + 5 H(+)(in) = a quinol + NAD(+) + 4 H(+)(out). Functionally, NDH-1 shuttles electrons from NADH, via FMN and iron-sulfur (Fe-S) centers, to quinones in the respiratory chain. The immediate electron acceptor for the enzyme in this species is believed to be ubiquinone. Couples the redox reaction to proton translocation (for every two electrons transferred, four hydrogen ions are translocated across the cytoplasmic membrane), and thus conserves the redox energy in a proton gradient. The chain is NADH-quinone oxidoreductase subunit I from Pseudomonas fluorescens (strain ATCC BAA-477 / NRRL B-23932 / Pf-5).